Here is a 613-residue protein sequence, read N- to C-terminus: Dihydroxy-acid dehydratase (613 aa).

A Mg(2+)-binding site is contributed by D81. C122 serves as a coordination point for [2Fe-2S] cluster. Mg(2+)-binding residues include D123 and K124. Residue K124 is modified to N6-carboxylysine. C193 is a [2Fe-2S] cluster binding site. E489 is a binding site for Mg(2+). S515 (proton acceptor) is an active-site residue.

The protein belongs to the IlvD/Edd family. As to quaternary structure, homodimer. It depends on [2Fe-2S] cluster as a cofactor. Requires Mg(2+) as cofactor.

The catalysed reaction is (2R)-2,3-dihydroxy-3-methylbutanoate = 3-methyl-2-oxobutanoate + H2O. The enzyme catalyses (2R,3R)-2,3-dihydroxy-3-methylpentanoate = (S)-3-methyl-2-oxopentanoate + H2O. The protein operates within amino-acid biosynthesis; L-isoleucine biosynthesis; L-isoleucine from 2-oxobutanoate: step 3/4. It participates in amino-acid biosynthesis; L-valine biosynthesis; L-valine from pyruvate: step 3/4. Its function is as follows. Functions in the biosynthesis of branched-chain amino acids. Catalyzes the dehydration of (2R,3R)-2,3-dihydroxy-3-methylpentanoate (2,3-dihydroxy-3-methylvalerate) into 2-oxo-3-methylpentanoate (2-oxo-3-methylvalerate) and of (2R)-2,3-dihydroxy-3-methylbutanoate (2,3-dihydroxyisovalerate) into 2-oxo-3-methylbutanoate (2-oxoisovalerate), the penultimate precursor to L-isoleucine and L-valine, respectively. In Pseudomonas putida (strain ATCC 47054 / DSM 6125 / CFBP 8728 / NCIMB 11950 / KT2440), this protein is Dihydroxy-acid dehydratase.